The sequence spans 130 residues: Small ribosomal subunit protein uS8 (130 aa).

This sequence belongs to the universal ribosomal protein uS8 family.

The chain is Small ribosomal subunit protein uS8 (RPS15A) from Strongylocentrotus purpuratus (Purple sea urchin).